Consider the following 462-residue polypeptide: Trigger factor (462 aa).

In terms of domain architecture, PPIase FKBP-type spans Gly-163 to Leu-248. Residues Ser-442–Lys-462 are disordered. Positions Ala-452–Lys-462 are enriched in basic and acidic residues.

This sequence belongs to the FKBP-type PPIase family. Tig subfamily.

Its subcellular location is the cytoplasm. The enzyme catalyses [protein]-peptidylproline (omega=180) = [protein]-peptidylproline (omega=0). In terms of biological role, involved in protein export. Acts as a chaperone by maintaining the newly synthesized protein in an open conformation. Functions as a peptidyl-prolyl cis-trans isomerase. This chain is Trigger factor, found in Mycoplasmopsis synoviae (strain 53) (Mycoplasma synoviae).